The chain runs to 198 residues: Holliday junction resolvase RecU (198 aa).

Residues 1–21 (MVNYPHKLSSQKRQPSLSQPK) form a disordered region. The segment covering 11 to 21 (QKRQPSLSQPK) has biased composition (polar residues). Thr81, Asp83, Glu96, and Gln115 together coordinate Mg(2+).

This sequence belongs to the RecU family. Requires Mg(2+) as cofactor.

It localises to the cytoplasm. The catalysed reaction is Endonucleolytic cleavage at a junction such as a reciprocal single-stranded crossover between two homologous DNA duplexes (Holliday junction).. Endonuclease that resolves Holliday junction intermediates in genetic recombination. Cleaves mobile four-strand junctions by introducing symmetrical nicks in paired strands. Promotes annealing of linear ssDNA with homologous dsDNA. Required for DNA repair, homologous recombination and chromosome segregation. The sequence is that of Holliday junction resolvase RecU from Streptococcus pneumoniae (strain ATCC 700669 / Spain 23F-1).